Reading from the N-terminus, the 145-residue chain is D-aminoacyl-tRNA deacylase (145 aa).

A Gly-cisPro motif, important for rejection of L-amino acids motif is present at residues 137 to 138 (GP).

This sequence belongs to the DTD family. As to quaternary structure, homodimer.

The protein resides in the cytoplasm. The enzyme catalyses glycyl-tRNA(Ala) + H2O = tRNA(Ala) + glycine + H(+). It catalyses the reaction a D-aminoacyl-tRNA + H2O = a tRNA + a D-alpha-amino acid + H(+). An aminoacyl-tRNA editing enzyme that deacylates mischarged D-aminoacyl-tRNAs. Also deacylates mischarged glycyl-tRNA(Ala), protecting cells against glycine mischarging by AlaRS. Acts via tRNA-based rather than protein-based catalysis; rejects L-amino acids rather than detecting D-amino acids in the active site. By recycling D-aminoacyl-tRNA to D-amino acids and free tRNA molecules, this enzyme counteracts the toxicity associated with the formation of D-aminoacyl-tRNA entities in vivo and helps enforce protein L-homochirality. The polypeptide is D-aminoacyl-tRNA deacylase (Shewanella baltica (strain OS195)).